A 557-amino-acid polypeptide reads, in one-letter code: MTDNNKYRDVEIRAPRGNKLTAKSWLTEAPLRMLMNNLDPQVAENPKELVVYGGIGRAARNWACYDKIVETLTRLEDDETLLVQSGKPVGVFKTHSNAPRVLIANSNLVPHWANWEHFNELDAKGLAMYGQMTAGSWIYIGSQGIVQGTYETFVEAGRQHYGGSLKGKWVLTAGLGGMGGAQPLAATLAGACSLNIECQQSRIDFRLETRYVDEQATDLDDALARIAKYTAEGKAISIALHGNAAEILPELVKRGVRPDMVTDQTSAHDPLNGYLPAGWTWEQYRDRAQTEPAAVVKAAKQSMAVHVQAMLDFQKQGIPTFDYGNNIRQMAKEEGVANAFDFPGFVPAYIRPLFCRGVGPFRWAALSGEAEDIYKTDAKVKELIPDDAHLHRWLDMARERISFQGLPARICWVGLGLRAKLGLAFNEMVRSGELSAPVVIGRDHLDSGSVSSPNRETEAMRDGSDAVSDWPLLNALLNTAGGATWVSLHHGGGVGMGFSQHSGMVIVCDGTDEAAERIARVLTNDPGTGVMRHADAGYDIAIDCAKEQGLDLPMITG.

NAD(+) is bound by residues 53 to 54, glutamine 131, 177 to 179, glutamate 197, arginine 202, 243 to 244, 264 to 268, 274 to 275, and tyrosine 323; these read GG, GMG, NA, QTSAH, and YL. Cysteine 411 is an active-site residue. Glycine 493 is a binding site for NAD(+).

This sequence belongs to the urocanase family. Requires NAD(+) as cofactor.

Its subcellular location is the cytoplasm. It catalyses the reaction 4-imidazolone-5-propanoate = trans-urocanate + H2O. The protein operates within amino-acid degradation; L-histidine degradation into L-glutamate; N-formimidoyl-L-glutamate from L-histidine: step 2/3. Its function is as follows. Catalyzes the conversion of urocanate to 4-imidazolone-5-propionate. The chain is Urocanate hydratase from Pseudomonas putida (strain ATCC 700007 / DSM 6899 / JCM 31910 / BCRC 17059 / LMG 24140 / F1).